Reading from the N-terminus, the 33-residue chain is Unknown 31.6 kDa protein from 2D-PAGE (33 aa).

This chain is Unknown 31.6 kDa protein from 2D-PAGE, found in Onion yellows phytoplasma.